The following is a 165-amino-acid chain: Nuclear cap-binding protein subunit 2 (165 aa).

MRNA contacts are provided by residues tyrosine 19, tyrosine 42, 111–115, 122–126, and 132–133; these read RADWD, RQYGR, and QV. The RRM domain occupies 39 to 117; the sequence is HTLYVGNLSF…RIIRADWDAG (79 aa). The segment at 144–165 is disordered; that stretch reads ARGGYGKLAQQHRPTEAIRNTF.

This sequence belongs to the RRM NCBP2 family. As to quaternary structure, component of the nuclear cap-binding complex (CBC), a heterodimer composed of ncbp1/cbp80 and ncbp2/cbp20 that interacts with m7GpppG-capped RNA.

The protein resides in the nucleus. The protein localises to the cytoplasm. Its function is as follows. Component of the cap-binding complex (CBC), which binds co-transcriptionally to the 5' cap of pre-mRNAs and is involved in various processes such as pre-mRNA splicing, translation regulation, nonsense-mediated mRNA decay, RNA-mediated gene silencing (RNAi) by microRNAs (miRNAs) and mRNA export. The CBC complex is involved in mRNA export from the nucleus, leading to the recruitment of the mRNA export machinery to the 5' end of mRNA and to mRNA export in a 5' to 3' direction through the nuclear pore. The CBC complex is also involved in mediating U snRNA and intronless mRNAs export from the nucleus. The CBC complex is essential for a pioneer round of mRNA translation, before steady state translation when the CBC complex is replaced by cytoplasmic cap-binding protein eIF4E. The pioneer round of mRNA translation mediated by the CBC complex plays a central role in nonsense-mediated mRNA decay (NMD), NMD only taking place in mRNAs bound to the CBC complex, but not on eIF4E-bound mRNAs. The CBC complex enhances NMD in mRNAs containing at least one exon-junction complex (EJC), promoting the interaction between upf1 and upf2. The CBC complex is also involved in 'failsafe' NMD, which is independent of the EJC complex, while it does not participate in Staufen-mediated mRNA decay (SMD). During cell proliferation, the CBC complex is also involved in microRNAs (miRNAs) biogenesis via its interaction with srrt/ars2, thereby being required for miRNA-mediated RNA interference. The CBC complex also acts as a negative regulator of parn, thereby acting as an inhibitor of mRNA deadenylation. In the CBC complex, ncbp2/cbp20 recognizes and binds capped RNAs (m7GpppG-capped RNA) but requires ncbp1/cbp80 to stabilize the movement of its N-terminal loop and lock the CBC into a high affinity cap-binding state with the cap structure. The conventional cap-binding complex with NCBP2 binds both small nuclear RNA (snRNA) and messenger (mRNA) and is involved in their export from the nucleus. In Siniperca chuatsi (Mandarin fish), this protein is Nuclear cap-binding protein subunit 2 (ncbp2).